Reading from the N-terminus, the 348-residue chain is DnaJ homolog subfamily B member 5 (348 aa).

One can recognise a J domain in the interval 4-68 (DYYKILGIPS…KKRGLYDQYG (65 aa)).

This is DnaJ homolog subfamily B member 5 (DNAJB5) from Bos taurus (Bovine).